The following is a 246-amino-acid chain: Pyridoxine 5'-phosphate synthase (246 aa).

The 3-amino-2-oxopropyl phosphate site is built by asparagine 8 and arginine 19. Histidine 44 (proton acceptor) is an active-site residue. Residues arginine 46 and histidine 51 each contribute to the 1-deoxy-D-xylulose 5-phosphate site. Glutamate 76 serves as the catalytic Proton acceptor. Residue threonine 106 coordinates 1-deoxy-D-xylulose 5-phosphate. The Proton donor role is filled by histidine 198. Residues aspartate 199 and 221-222 (GH) contribute to the 3-amino-2-oxopropyl phosphate site.

This sequence belongs to the PNP synthase family. As to quaternary structure, homooctamer; tetramer of dimers.

It is found in the cytoplasm. The catalysed reaction is 3-amino-2-oxopropyl phosphate + 1-deoxy-D-xylulose 5-phosphate = pyridoxine 5'-phosphate + phosphate + 2 H2O + H(+). It functions in the pathway cofactor biosynthesis; pyridoxine 5'-phosphate biosynthesis; pyridoxine 5'-phosphate from D-erythrose 4-phosphate: step 5/5. Its function is as follows. Catalyzes the complicated ring closure reaction between the two acyclic compounds 1-deoxy-D-xylulose-5-phosphate (DXP) and 3-amino-2-oxopropyl phosphate (1-amino-acetone-3-phosphate or AAP) to form pyridoxine 5'-phosphate (PNP) and inorganic phosphate. In Mesorhizobium japonicum (strain LMG 29417 / CECT 9101 / MAFF 303099) (Mesorhizobium loti (strain MAFF 303099)), this protein is Pyridoxine 5'-phosphate synthase.